A 380-amino-acid chain; its full sequence is Chaperone protein DnaJ (380 aa).

The J domain occupies 5–70 (DFYETLGVSK…QKRAAYDRFG (66 aa)). A CR-type zinc finger spans residues 141-219 (GKTAQIRVPT…CHGQGRVTEE (79 aa)). Zn(2+) is bound by residues C154, C157, C171, C174, C193, C196, C207, and C210. CXXCXGXG motif repeat units follow at residues 154 to 161 (CEVCSGSG), 171 to 178 (CATCQGSG), 193 to 200 (CPTCQGRG), and 207 to 214 (CGKCHGQG).

The protein belongs to the DnaJ family. As to quaternary structure, homodimer. Zn(2+) serves as cofactor.

The protein resides in the cytoplasm. Its function is as follows. Participates actively in the response to hyperosmotic and heat shock by preventing the aggregation of stress-denatured proteins and by disaggregating proteins, also in an autonomous, DnaK-independent fashion. Unfolded proteins bind initially to DnaJ; upon interaction with the DnaJ-bound protein, DnaK hydrolyzes its bound ATP, resulting in the formation of a stable complex. GrpE releases ADP from DnaK; ATP binding to DnaK triggers the release of the substrate protein, thus completing the reaction cycle. Several rounds of ATP-dependent interactions between DnaJ, DnaK and GrpE are required for fully efficient folding. Also involved, together with DnaK and GrpE, in the DNA replication of plasmids through activation of initiation proteins. This chain is Chaperone protein DnaJ, found in Allorhizobium ampelinum (strain ATCC BAA-846 / DSM 112012 / S4) (Agrobacterium vitis (strain S4)).